The sequence spans 504 residues: Maturase K (504 aa).

It belongs to the intron maturase 2 family. MatK subfamily.

Its subcellular location is the plastid. It localises to the chloroplast. Functionally, usually encoded in the trnK tRNA gene intron. Probably assists in splicing its own and other chloroplast group II introns. In Lepidium virginicum (Virginia pepperweed), this protein is Maturase K.